A 135-amino-acid chain; its full sequence is Immunity protein RhsIA (135 aa).

The segment at 58–77 is disordered; that stretch reads RKQGRQISLSCGEPPEYSPD.

Functionally, immunity component of a toxin-immunity protein module, which functions as a cellular contact-dependent growth inhibition (CDI) system. Specifically inhibits its cognate toxin RhsA. Cell contact is necessary for growth inhibition. In Dickeya dadantii (strain 3937) (Erwinia chrysanthemi (strain 3937)), this protein is Immunity protein RhsIA (rhsIA).